A 281-amino-acid chain; its full sequence is Urease accessory protein UreD (281 aa).

This sequence belongs to the UreD family. As to quaternary structure, ureD, UreF and UreG form a complex that acts as a GTP-hydrolysis-dependent molecular chaperone, activating the urease apoprotein by helping to assemble the nickel containing metallocenter of UreC. The UreE protein probably delivers the nickel.

It localises to the cytoplasm. Its function is as follows. Required for maturation of urease via the functional incorporation of the urease nickel metallocenter. This is Urease accessory protein UreD from Pseudomonas savastanoi pv. phaseolicola (strain 1448A / Race 6) (Pseudomonas syringae pv. phaseolicola (strain 1448A / Race 6)).